Here is a 530-residue protein sequence, read N- to C-terminus: Histone-arginine methyltransferase CARMER (530 aa).

The SAM-dependent MTase PRMT-type domain maps to 141–450 (ASQYFQFYGY…QSYDVTIDLH (310 aa)). Residues Gln154, Arg163, Gly187, Glu209, Glu238, and Thr266 each contribute to the S-adenosyl-L-methionine site. Arg501 carries the post-translational modification Asymmetric dimethylarginine; by autocatalysis.

The protein belongs to the class I-like SAM-binding methyltransferase superfamily. Protein arginine N-methyltransferase family. Homodimer. Post-translationally, the dimethylated protein is the major form.

It is found in the cytoplasm. Its subcellular location is the nucleus. It catalyses the reaction L-arginyl-[protein] + 2 S-adenosyl-L-methionine = N(omega),N(omega)-dimethyl-L-arginyl-[protein] + 2 S-adenosyl-L-homocysteine + 2 H(+). Its function is as follows. Methylates (mono- and asymmetric dimethylation) the guanidino nitrogens of arginyl residues in proteins. May methylate histone H3 at 'Arg-17' and activate transcription via chromatin remodeling. The chain is Histone-arginine methyltransferase CARMER (Art4) from Drosophila erecta (Fruit fly).